The following is a 591-amino-acid chain: V-type ATP synthase alpha chain (591 aa).

An ATP-binding site is contributed by 233 to 240 (GPFGAGKT).

It belongs to the ATPase alpha/beta chains family.

The catalysed reaction is ATP + H2O + 4 H(+)(in) = ADP + phosphate + 5 H(+)(out). Produces ATP from ADP in the presence of a proton gradient across the membrane. The V-type alpha chain is a catalytic subunit. This Streptococcus pyogenes serotype M1 protein is V-type ATP synthase alpha chain.